Here is a 115-residue protein sequence, read N- to C-terminus: Large ribosomal subunit protein bL19 (115 aa).

This sequence belongs to the bacterial ribosomal protein bL19 family.

This protein is located at the 30S-50S ribosomal subunit interface and may play a role in the structure and function of the aminoacyl-tRNA binding site. In Buchnera aphidicola subsp. Acyrthosiphon pisum (strain Tuc7), this protein is Large ribosomal subunit protein bL19.